The following is a 115-amino-acid chain: Small polypeptide DEVIL 13 (115 aa).

Basic and acidic residues predominate over residues 1 to 12 (MEEKWKLSKKDT). Residues 1–89 (MEEKWKLSKK…SITQKYSSLA (89 aa)) form a disordered region. A compositionally biased stretch (low complexity) spans 13–65 (TASSSSSKSKFSRSFSTSASSTKSPIFVRSSSTKCSVPSSSSSSSSSSSISRS). Residues 44 to 63 (STKCSVPSSSSSSSSSSSIS) form a helical membrane-spanning segment. The required for DVL/RTFL small polypeptide activity stretch occupies residues 80–111 (SITQKYSSLAKEQKARFYIMRRCVAMLVCWHK).

This sequence belongs to the DVL/RTFL small polypeptides family.

It localises to the cell membrane. Small polypeptide acting as a regulatory molecule which coordinates cellular responses required for differentiation, growth and development, probably by restricting polar cell proliferation in lateral organs and coordinating socket cell recruitment and differentiation at trichome sites. This Arabidopsis thaliana (Mouse-ear cress) protein is Small polypeptide DEVIL 13.